A 357-amino-acid polypeptide reads, in one-letter code: MAKIMVAMSGGVDSSLTAVLLKEQGHDVTGVTMHLWEGDDNGIMESQCCSVEMTAGARRVCAQYDIPYYVFNYQKDFRKHVIDYFLREYSSGATPNPCLACNRDLKFRVLLERAELLGFDGLATGHFVQITGGGEQPYDLRRGIDINKDQSYVLYMLSQRELGRLHFPLGGFTKPQVRQMARERGLVTADKPESMDICFIPDNNYRRFLNEERPEIMQPGPIVNRHGTVLGQHKGLPQYTIGQRKGLGIAAGSPLFVIEIDTVRNLLIVGDADELERRDFVIDDVRSVYGQIEAGIYAVQIRAHGEAVPATITPREDGTLHIRYDQPQRSVTPGQAAVLYRDDRVFGGGRISTERYS.

ATP-binding positions include 7–14 (AMSGGVDS) and M33. The Nucleophile role is filled by C101. Cysteines 101 and 198 form a disulfide. G125 contacts ATP. Positions 148–150 (KDQ) are interaction with tRNA. C198 functions as the Cysteine persulfide intermediate in the catalytic mechanism.

This sequence belongs to the MnmA/TRMU family.

It is found in the cytoplasm. It carries out the reaction S-sulfanyl-L-cysteinyl-[protein] + uridine(34) in tRNA + AH2 + ATP = 2-thiouridine(34) in tRNA + L-cysteinyl-[protein] + A + AMP + diphosphate + H(+). In terms of biological role, catalyzes the 2-thiolation of uridine at the wobble position (U34) of tRNA, leading to the formation of s(2)U34. The chain is tRNA-specific 2-thiouridylase MnmA from Herpetosiphon aurantiacus (strain ATCC 23779 / DSM 785 / 114-95).